The sequence spans 146 residues: Small ribosomal subunit protein uS5 (146 aa).

One can recognise an S5 DRBM domain in the interval 8–71 (FSEVVVNIGR…DDAFKNIIKV (64 aa)).

This sequence belongs to the universal ribosomal protein uS5 family. As to quaternary structure, part of the 30S ribosomal subunit. Contacts proteins S4 and S8.

With S4 and S12 plays an important role in translational accuracy. Functionally, located at the back of the 30S subunit body where it stabilizes the conformation of the head with respect to the body. The sequence is that of Small ribosomal subunit protein uS5 from Helicobacter hepaticus (strain ATCC 51449 / 3B1).